Consider the following 450-residue polypeptide: Biotin carboxylase 1 (450 aa).

The Biotin carboxylation domain occupies 1–447 (MIKKLLIANR…NTKFLETYDV (447 aa)). ATP is bound by residues lysine 116, lysine 158, 164–165 (GG), 200–203 (EKYI), and histidine 208. In terms of domain architecture, ATP-grasp spans 120-318 (RETMKQAGVP…LIKEQIKVAS (199 aa)). Lysine 237 contacts hydrogencarbonate. ATP-binding residues include glutamate 275 and glutamate 289. Positions 275, 289, and 291 each coordinate Mg(2+). Residues glutamate 275, glutamate 289, and asparagine 291 each contribute to the Mn(2+) site. Hydrogencarbonate is bound by residues arginine 293, valine 296, and arginine 339. Residue arginine 293 is part of the active site. Position 339 (arginine 339) interacts with biotin.

Acetyl-CoA carboxylase is a heterohexamer of biotin carboxyl carrier protein, biotin carboxylase and the two subunits of carboxyl transferase in a 2:2 complex. It depends on Mg(2+) as a cofactor. Requires Mn(2+) as cofactor.

It catalyses the reaction N(6)-biotinyl-L-lysyl-[protein] + hydrogencarbonate + ATP = N(6)-carboxybiotinyl-L-lysyl-[protein] + ADP + phosphate + H(+). It functions in the pathway lipid metabolism; malonyl-CoA biosynthesis; malonyl-CoA from acetyl-CoA: step 1/1. This protein is a component of the acetyl coenzyme A carboxylase complex; first, biotin carboxylase catalyzes the carboxylation of the carrier protein and then the transcarboxylase transfers the carboxyl group to form malonyl-CoA. In Bacillus subtilis (strain 168), this protein is Biotin carboxylase 1 (accC1).